The primary structure comprises 3146 residues: Bassianolide nonribosomal cyclodepsipeptide synthetase (3146 aa).

Residues 1-12 (MEPPNNANTGQL) are compositionally biased toward polar residues. The disordered stretch occupies residues 1–23 (MEPPNNANTGQLGPTLPNGTVDL). Positions 69–454 (HVVYEIPEDV…INKLQSTDGS (386 aa)) are condensation 1. The tract at residues 495–887 (GDTPNKPAVC…GRMDSQVKIR (393 aa)) is adenylation 1. Residues 1015 to 1091 (PDASAGVTKL…SLQAAIGGSS (77 aa)) enclose the Carrier 1 domain. Ser1052 carries the O-(pantetheine 4'-phosphoryl)serine modification. The interval 1109–1538 (SYSQGRLWFL…QTLISVVPLT (430 aa)) is condensation 2. Residues 1567 to 1973 (FRTQVASYPD…GRMDFQFKIR (407 aa)) form an adenylation 2 region. Positions 2041–2181 (TYTELDTVSS…FPTRDYLERV (141 aa)) are S-adenosyl-L-methionine-dependent N-methyltransferase (MT). Carrier domains are found at residues 2514–2588 (FPLS…RQQL) and 2614–2688 (APTT…EVSQ). Ser2548 and Ser2648 each carry O-(pantetheine 4'-phosphoryl)serine. Residues 2734 to 3138 (QDVYLATHLQ…THLMEQVCNT (405 aa)) are condensation 3.

This sequence belongs to the NRP synthetase family.

It carries out the reaction 4 (R)-2-hydroxy-3-methylbutanoate + 4 L-leucine + 4 S-adenosyl-L-methionine + 8 ATP = bassianolide + 8 AMP + 4 S-adenosyl-L-homocysteine + 8 diphosphate + 8 H(+). Bassianolide nonribosomal synthetase that mediates the biosynthesis of bassianolide (BSL), a non-ribosomal cyclodepsipeptide that shows insecticidal and cancer cell antiproliferative activity. BSLS first catalyzes the iterative synthesis of an enzyme-bound dipeptidol monomer intermediate from D-2-hydroxyisovalerate and L-leucine before performing the condensation and cyclization of 4 dipeptidol monomers to yield the cyclic tetrameric ester bassianolide. The N-methyltransferase MT domain is responsible for the methylation of the leucine residues of bassianolide. BSLS is flexible with both the amino acid and hydroxyl acid precursors, and produces bassianolide as the major product (containing N-methyl-L-Leu), together with small amounts of beauvericin and its analogs beauvericins A-C (containing N-methyl-L-Phe). This is Bassianolide nonribosomal cyclodepsipeptide synthetase from Beauveria bassiana (White muscardine disease fungus).